The primary structure comprises 100 residues: Toxin Rv0299 (100 aa).

Functionally, toxic component of a type II toxin-antitoxin (TA) system. Upon expression in M.smegmatis inhibits colony formation. Its toxic effect is neutralized by coexpression with cognate antitoxin Rv0298/MT0312. The polypeptide is Toxin Rv0299 (Mycobacterium tuberculosis (strain ATCC 25618 / H37Rv)).